Here is a 323-residue protein sequence, read N- to C-terminus: D-specific alpha-keto acid dehydrogenase (323 aa).

NAD(+)-binding positions include 157–158 (HI), 230–232 (TGR), and Asp-256. Residue Arg-232 is part of the active site. The active site involves Glu-261. His-293 functions as the Proton donor in the catalytic mechanism. 293–296 (HTAY) provides a ligand contact to NAD(+).

This sequence belongs to the D-isomer specific 2-hydroxyacid dehydrogenase family.

Functionally, required for high-level resistance to glycopeptides antibiotics. Catalyzes the reduction of 2-keto acids to 2-D-hydroxy acids that give rise to peptidoglycan precursors that terminate in the depsipeptide D-alanine-2-lactate rather than the dipeptide D-alanine-D-alanine thus preventing vancomycin binding. This is D-specific alpha-keto acid dehydrogenase (vanHB) from Enterococcus faecalis (strain ATCC 700802 / V583).